The sequence spans 607 residues: Elongation factor 4 (607 aa).

In terms of domain architecture, tr-type G spans 11 to 193 (EKIRNFSIIA…QIVEKVPAPT (183 aa)). GTP-binding positions include 23 to 28 (DHGKST) and 140 to 143 (NKID).

It belongs to the TRAFAC class translation factor GTPase superfamily. Classic translation factor GTPase family. LepA subfamily.

The protein localises to the cell membrane. The enzyme catalyses GTP + H2O = GDP + phosphate + H(+). Functionally, required for accurate and efficient protein synthesis under certain stress conditions. May act as a fidelity factor of the translation reaction, by catalyzing a one-codon backward translocation of tRNAs on improperly translocated ribosomes. Back-translocation proceeds from a post-translocation (POST) complex to a pre-translocation (PRE) complex, thus giving elongation factor G a second chance to translocate the tRNAs correctly. Binds to ribosomes in a GTP-dependent manner. The sequence is that of Elongation factor 4 from Streptococcus pneumoniae serotype 19F (strain G54).